Reading from the N-terminus, the 100-residue chain is Large ribosomal subunit protein uL23 (100 aa).

Belongs to the universal ribosomal protein uL23 family. In terms of assembly, part of the 50S ribosomal subunit. Contacts protein L29, and trigger factor when it is bound to the ribosome.

Its function is as follows. One of the early assembly proteins it binds 23S rRNA. One of the proteins that surrounds the polypeptide exit tunnel on the outside of the ribosome. Forms the main docking site for trigger factor binding to the ribosome. This is Large ribosomal subunit protein uL23 from Thermosynechococcus vestitus (strain NIES-2133 / IAM M-273 / BP-1).